The chain runs to 111 residues: Large ribosomal subunit protein uL22 (111 aa).

It belongs to the universal ribosomal protein uL22 family. Part of the 50S ribosomal subunit.

Functionally, this protein binds specifically to 23S rRNA; its binding is stimulated by other ribosomal proteins, e.g. L4, L17, and L20. It is important during the early stages of 50S assembly. It makes multiple contacts with different domains of the 23S rRNA in the assembled 50S subunit and ribosome. Its function is as follows. The globular domain of the protein is located near the polypeptide exit tunnel on the outside of the subunit, while an extended beta-hairpin is found that lines the wall of the exit tunnel in the center of the 70S ribosome. The chain is Large ribosomal subunit protein uL22 from Xylella fastidiosa (strain M23).